We begin with the raw amino-acid sequence, 152 residues long: Ribosome maturation factor RimP (152 aa).

This sequence belongs to the RimP family.

It is found in the cytoplasm. Required for maturation of 30S ribosomal subunits. The polypeptide is Ribosome maturation factor RimP (Idiomarina loihiensis (strain ATCC BAA-735 / DSM 15497 / L2-TR)).